The primary structure comprises 154 residues: Protein X (154 aa).

Residues 68–117 (PCALRFTSARRMETTVNAHRNLPKVLHKRTLGLSAMSTTDLEAYFKDCVF) are mitochondrial targeting sequence.

Belongs to the orthohepadnavirus protein X family. In terms of assembly, may form homodimer. May interact with host CEBPA, CFLAR, CREB1, DDB1, E4F1, HBXIP, HSPD1/HSP60, NFKBIA, POLR2E and SMAD4. Interacts with host SMC5-SMC6 complex and induces its degradation. Interacts with host TRPC4AP; leading to prevent ubiquitination of TRPC4AP. Interacts with host PLSCR1; this interaction promotes ubiquitination and degradation of HBx and impairs HBx-mediated cell proliferation. A fraction may be phosphorylated in insect cells and HepG2 cells, a human hepatoblastoma cell line. Phosphorylated in vitro by host protein kinase C or mitogen-activated protein kinase. N-acetylated in insect cells.

The protein localises to the host cytoplasm. The protein resides in the host nucleus. It localises to the host mitochondrion. Multifunctional protein that plays a role in silencing host antiviral defenses and promoting viral transcription. Does not seem to be essential for HBV infection. May be directly involved in development of cirrhosis and liver cancer (hepatocellular carcinoma). Most of cytosolic activities involve modulation of cytosolic calcium. The effect on apoptosis is controversial depending on the cell types in which the studies have been conducted. May induce apoptosis by localizing in mitochondria and causing loss of mitochondrial membrane potential. May also modulate apoptosis by binding host CFLAR, a key regulator of the death-inducing signaling complex (DISC). Promotes viral transcription by using the host E3 ubiquitin ligase DDB1 to target the SMC5-SMC6 complex to proteasomal degradation. This host complex would otherwise bind to viral episomal DNA, and prevents its transcription. Moderately stimulates transcription of many different viral and cellular transcription elements. Promoters and enhancers stimulated by HBx contain DNA binding sites for NF-kappa-B, AP-1, AP-2, c-EBP, ATF/CREB, or the calcium-activated factor NF-AT. The sequence is that of Protein X from Hepatitis B virus genotype B1 subtype adw (isolate Japan/pJDW233/1988) (HBV-B).